The primary structure comprises 267 residues: Digeranylgeranylglyceryl phosphate synthase (267 aa).

7 helical membrane-spanning segments follow: residues 10-30, 33-53, 80-100, 104-121, 139-159, 198-218, and 247-267; these read ANCV…GALL, LHTP…GNAI, AALI…GLIN, LALA…AARL, TFLF…LSIL, VLAS…PLGI, and QRWI…GYHI.

This sequence belongs to the UbiA prenyltransferase family. DGGGP synthase subfamily. Mg(2+) serves as cofactor.

It is found in the cell membrane. It carries out the reaction sn-3-O-(geranylgeranyl)glycerol 1-phosphate + (2E,6E,10E)-geranylgeranyl diphosphate = 2,3-bis-O-(geranylgeranyl)-sn-glycerol 1-phosphate + diphosphate. It participates in membrane lipid metabolism; glycerophospholipid metabolism. Functionally, prenyltransferase that catalyzes the transfer of the geranylgeranyl moiety of geranylgeranyl diphosphate (GGPP) to the C2 hydroxyl of (S)-3-O-geranylgeranylglyceryl phosphate (GGGP). This reaction is the second ether-bond-formation step in the biosynthesis of archaeal membrane lipids. The sequence is that of Digeranylgeranylglyceryl phosphate synthase from Methanothrix thermoacetophila (strain DSM 6194 / JCM 14653 / NBRC 101360 / PT) (Methanosaeta thermophila).